A 296-amino-acid chain; its full sequence is Urease accessory protein UreD (296 aa).

The protein belongs to the UreD family. UreD, UreF and UreG form a complex that acts as a GTP-hydrolysis-dependent molecular chaperone, activating the urease apoprotein by helping to assemble the nickel containing metallocenter of UreC. The UreE protein probably delivers the nickel.

Its subcellular location is the cytoplasm. Required for maturation of urease via the functional incorporation of the urease nickel metallocenter. The polypeptide is Urease accessory protein UreD (Methylibium petroleiphilum (strain ATCC BAA-1232 / LMG 22953 / PM1)).